The sequence spans 934 residues: Complement component C6 (934 aa).

Positions 1–21 (MARRSVLYFILLNALINKGQA) are cleaved as a signal peptide. Disulfide bonds link cysteine 22–cysteine 61, cysteine 24–cysteine 65, cysteine 35–cysteine 73, cysteine 39–cysteine 78, cysteine 82–cysteine 117, cysteine 93–cysteine 127, cysteine 96–cysteine 133, cysteine 140–cysteine 151, cysteine 146–cysteine 164, cysteine 158–cysteine 173, and cysteine 180–cysteine 218. TSP type-1 domains lie at 22–79 (CFCD…QRCP) and 81–134 (NCLL…KLCK). Residue tryptophan 29 is glycosylated (C-linked (Man) tryptophan). C-linked (Man) tryptophan; partial glycosylation occurs at tryptophan 32. An O-linked (Fuc...) threonine glycan is attached at threonine 38. The C-linked (Man) tryptophan; partial glycan is linked to tryptophan 90. The 38-residue stretch at 138 to 175 (ADCKNKFRCDSGRCIARKLECNGENDCGDNSDERDCGR) folds into the LDL-receptor class A domain. 6 residues coordinate Ca(2+): leucine 156, asparagine 159, glutamate 161, aspartate 163, aspartate 169, and glutamate 170. In terms of domain architecture, MACPF spans 176–522 (TKAVCTRKYN…EYAAKFDPCQ (347 aa)). A beta stranded membrane pass occupies residues 278-290 (SFSVPIFYSSKRS). Residue asparagine 324 is glycosylated (N-linked (GlcNAc...) asparagine). An O-linked (Fuc...) threonine glycan is attached at threonine 392. 16 disulfide bridges follow: cysteine 399/cysteine 420, cysteine 499/cysteine 623, cysteine 521/cysteine 570, cysteine 523/cysteine 539, cysteine 526/cysteine 541, cysteine 543/cysteine 552, cysteine 577/cysteine 611, cysteine 589/cysteine 601, cysteine 644/cysteine 686, cysteine 672/cysteine 699, cysteine 704/cysteine 746, cysteine 732/cysteine 761, cysteine 773/cysteine 823, cysteine 784/cysteine 801, cysteine 786/cysteine 837, and cysteine 793/cysteine 816. Residues 402-415 (IETKKRVLFAKKTK) form a beta stranded membrane-spanning segment. One can recognise an EGF-like domain in the interval 523–553 (CAPCPNNGRPTLSGTECLCVCQSGTYGENCE). The region spanning 565–612 (DGQWGCWSSWSTCDATYKRSRTRECNNPAPQRGGKRCEGEKRQEEDCT) is the TSP type-1 3 domain. C-linked (Man) tryptophan; partial glycans are attached at residues tryptophan 568, tryptophan 571, and tryptophan 574. 2 CCP regions span residues 611-688 (CTFS…RCLP) and 689-765 (DGTW…EKDT). 2 consecutive Sushi domains span residues 642–701 (SGCP…ECQR) and 702–763 (TECI…TCEK). The C5b-binding domain stretch occupies residues 642–934 (SGCPQPVPPE…EILHPGKCLA (293 aa)). Positions 766–840 (LTKLKGHCQL…FLHIGSCQDG (75 aa)) are factor I module (FIM) 1. In terms of domain architecture, Kazal-like 1 spans 780-839 (SGSECICMSPEEDCSHHSEDLCVFDTDSNDYFTSPACKFLAEKCLNNQQLHFLHIGSCQD). Asparagine 855 carries N-linked (GlcNAc...) asparagine glycosylation. The factor I module (FIM) 2 stretch occupies residues 858 to 934 (KKESCGYDTC…EILHPGKCLA (77 aa)). Disulfide bonds link cysteine 862–cysteine 873, cysteine 867–cysteine 919, cysteine 880–cysteine 897, cysteine 882–cysteine 932, and cysteine 888–cysteine 912. The region spanning 876–934 (STSKCVCLLPPQCFKGGNQLYCVKMGSSTSEKTLNICEVGTIRCANRKMEILHPGKCLA) is the Kazal-like 2 domain.

This sequence belongs to the complement C6/C7/C8/C9 family. In terms of assembly, component of the membrane attack complex (MAC), composed of complement C5b, C6, C7, C8A, C8B, C8G and multiple copies of the pore-forming subunit C9. All cysteine residues are assumed to be cross-linked to one another. Individual modules containing an even number of conserved cysteine residues are supposed to have disulfide linkages only within the same module.

The protein localises to the secreted. Its subcellular location is the target cell membrane. With respect to regulation, membrane attack complex (MAC) assembly is inhibited by CD59, thereby protecting self-cells from damage during complement activation. MAC assembly is also inhibited by clusterin (CLU) chaperones that inhibit polymerization of C9. In terms of biological role, component of the membrane attack complex (MAC), a multiprotein complex activated by the complement cascade, which inserts into a target cell membrane and forms a pore, leading to target cell membrane rupture and cell lysis. The MAC is initiated by proteolytic cleavage of C5 into complement C5b in response to the classical, alternative, lectin and GZMK complement pathways. The complement pathways consist in a cascade of proteins that leads to phagocytosis and breakdown of pathogens and signaling that strengthens the adaptive immune system. Together with component C5b, involved in MAC complex assembly: complement C5b and C6 associate with the outer leaflet of target cell membrane, reducing the energy for membrane bending. In Homo sapiens (Human), this protein is Complement component C6.